Here is a 617-residue protein sequence, read N- to C-terminus: Protein fem-1 homolog C (617 aa).

ANK repeat units follow at residues 2–31, 40–70, 82–111, 115–144, 148–177, 181–210, and 213–242; these read DLKTAVFNAARDGKLRLLSKLLENKAKDDV, NGATPLLMAARYGHLDMVDYLLDQCSASVEI, EGAPPLWAASAAGHLKVVRSLLVHGASVNN, TNSTPLRAACFDGHLEIVKYLVEHKADLEV, HGHTCLMISCYKGHKEIAQFLLEKGADVNR, KGNTALHDCAESGSLEIMQMLLKYGARMEK, and YGMTPLLSASVTGHTNIVDFLTQNPQTSKN. TPR repeat units follow at residues 245–279 and 338–371; these read INALELLGATFVDKKRDLLGALKYWKRAMDMRHSD and SYYIRYRGAVYADSGNFKRCINLWKYALDMQQNN. ANK repeat units lie at residues 481–523 and 527–556; these read NNFS…DVNV and EQNSPLHVAALNNHPDIMNLLVKSGAHFDS.

Belongs to the fem-1 family. As to quaternary structure, component of a CRL2 E3 ubiquitin-protein ligase complex, also named ECS (Elongin BC-CUL2/5-SOCS-box protein) complex.

It participates in protein modification; protein ubiquitination. Its function is as follows. Substrate-recognition component of a Cul2-RING (CRL2) E3 ubiquitin-protein ligase complex of the DesCEND (destruction via C-end degrons) pathway, which recognizes a C-degron located at the extreme C terminus of target proteins, leading to their ubiquitination and degradation. The C-degron recognized by the DesCEND pathway is usually a motif of less than ten residues and can be present in full-length proteins, truncated proteins or proteolytically cleaved forms. The CRL2(FEM1C) complex specifically recognizes proteins with an arginine at the C-terminus: recognizes and binds proteins ending with -Lys/Arg-Xaa-Arg and -Lys/Arg-Xaa-Xaa-Arg C-degrons, leading to their ubiquitination and degradation. The sequence is that of Protein fem-1 homolog C from Xenopus laevis (African clawed frog).